The primary structure comprises 466 residues: Cysteine--tRNA ligase (466 aa).

Cys-28 contacts Zn(2+). A 'HIGH' region motif is present at residues 30 to 40 (PTVYNFFHIGN). 3 residues coordinate Zn(2+): Cys-208, His-233, and Glu-237. Positions 265–269 (KMSKS) match the 'KMSKS' region motif. Lys-268 is an ATP binding site.

Belongs to the class-I aminoacyl-tRNA synthetase family. As to quaternary structure, monomer. Zn(2+) is required as a cofactor.

The protein localises to the cytoplasm. The enzyme catalyses tRNA(Cys) + L-cysteine + ATP = L-cysteinyl-tRNA(Cys) + AMP + diphosphate. In Clostridium perfringens (strain SM101 / Type A), this protein is Cysteine--tRNA ligase.